The following is a 128-amino-acid chain: MPVGEGSHHNKILGVRGEDLAAAYLERLRYRIIDRNFRCRGGEVDIVARDGKTLVFVEVKTRRTAGYGVPQLAVTPFKQRQISKAALAWLTRKGMLDVNARFDVIAITILSPDAPRIEHITNAFELAY.

It belongs to the UPF0102 family.

The polypeptide is UPF0102 protein GSU0650 (Geobacter sulfurreducens (strain ATCC 51573 / DSM 12127 / PCA)).